The following is a 97-amino-acid chain: Co-chaperonin GroES (97 aa).

This sequence belongs to the GroES chaperonin family. In terms of assembly, heptamer of 7 subunits arranged in a ring. Interacts with the chaperonin GroEL.

Its subcellular location is the cytoplasm. In terms of biological role, together with the chaperonin GroEL, plays an essential role in assisting protein folding. The GroEL-GroES system forms a nano-cage that allows encapsulation of the non-native substrate proteins and provides a physical environment optimized to promote and accelerate protein folding. GroES binds to the apical surface of the GroEL ring, thereby capping the opening of the GroEL channel. This is Co-chaperonin GroES from Burkholderia vietnamiensis.